The sequence spans 150 residues: Avidin-related protein 6 (150 aa).

Positions 1–24 are cleaved as a signal peptide; it reads MVHATSPLLLLLLLSLALVAPGLS. Positions 26-147 constitute an Avidin-like domain; sequence RKCSLTGEWD…GYNNFTRQRT (122 aa). A disulfide bond links C28 and C105. The biotin site is built by N36 and S40. The N-linked (GlcNAc...) asparagine glycan is linked to N54. 3 residues coordinate biotin: Y57, T59, and D63. N-linked (GlcNAc...) asparagine glycosylation occurs at N93. Residues S95, S99, and N140 each coordinate biotin. N141 carries an N-linked (GlcNAc...) asparagine glycan.

The protein belongs to the avidin/streptavidin family. Homotetramer. In terms of processing, glycosylated.

The protein localises to the secreted. Its function is as follows. Forms a strong non-covalent specific complex with biotin. The sequence is that of Avidin-related protein 6 (AVR6) from Gallus gallus (Chicken).